Consider the following 88-residue polypeptide: Large ribosomal subunit protein bL31B (88 aa).

It belongs to the bacterial ribosomal protein bL31 family. Type B subfamily. Part of the 50S ribosomal subunit.

This chain is Large ribosomal subunit protein bL31B, found in Paraburkholderia phytofirmans (strain DSM 17436 / LMG 22146 / PsJN) (Burkholderia phytofirmans).